The chain runs to 357 residues: Phenylalanine--tRNA ligase alpha subunit (357 aa).

Glu-278 provides a ligand contact to Mg(2+).

It belongs to the class-II aminoacyl-tRNA synthetase family. Phe-tRNA synthetase alpha subunit type 1 subfamily. Tetramer of two alpha and two beta subunits. The cofactor is Mg(2+).

The protein localises to the cytoplasm. It catalyses the reaction tRNA(Phe) + L-phenylalanine + ATP = L-phenylalanyl-tRNA(Phe) + AMP + diphosphate + H(+). This chain is Phenylalanine--tRNA ligase alpha subunit, found in Albidiferax ferrireducens (strain ATCC BAA-621 / DSM 15236 / T118) (Rhodoferax ferrireducens).